Consider the following 509-residue polypeptide: Circadian clock oscillator protein KaiC (509 aa).

KaiC domains follow at residues 1–243 and 257–509; these read MKDK…IIVF and IRIS…IEKN. Gly-45, Thr-46, Gly-47, Lys-48, Thr-49, Ser-85, Lys-220, Leu-221, Arg-222, Thr-224, His-226, Asp-237, Thr-286, Gly-287, Thr-288, Gly-289, Lys-290, and Thr-291 together coordinate ATP. Residue Thr-49 coordinates Mg(2+). Residues Thr-291 and Glu-314 each coordinate Mg(2+). Trp-327 is a binding site for ATP. Phosphoserine; by autocatalysis is present on Ser-427. Thr-428 bears the Phosphothreonine; by autocatalysis mark. ATP is bound by residues Arg-447, Lys-453, Met-454, Arg-455, Ser-457, His-459, and Lys-461.

This sequence belongs to the KaiC family. In terms of assembly, homohexamer; hexamerization is dependent on ATP-binding. Component of the KaiBC complex. KaiC interacts with SasA, activating its autokinase function and leading to RpaA activation. Mg(2+) serves as cofactor. Phosphorylated on serine and threonine residues by autocatalysis. Has a 4 step phosphorylation cycle; the autokinase acts first on Thr-428, then Ser-427. When Ser-427 is modified KaiC switches to an autophosphatase mode, acting first on phospho-Thr-428 then phospho-Ser-427.

It catalyses the reaction L-seryl-[protein] + ATP = O-phospho-L-seryl-[protein] + ADP + H(+). The enzyme catalyses L-threonyl-[protein] + ATP = O-phospho-L-threonyl-[protein] + ADP + H(+). The catalysed reaction is ATP + H2O = ADP + phosphate + H(+). Its function is as follows. Central component of the KaiBC oscillator complex, which constitutes the main circadian regulator in cyanobacteria. Its composition changes during the circadian cycle to control KaiC phosphorylation. Autophosphorylates and has a weak ATPase activity; ATPase activity defines the circadian period. The chain is Circadian clock oscillator protein KaiC from Prochlorococcus marinus subsp. pastoris (strain CCMP1986 / NIES-2087 / MED4).